The chain runs to 120 residues: Immunoglobulin kappa variable 2-24 (120 aa).

The N-terminal stretch at 1 to 19 is a signal peptide; the sequence is MRLLAQLLGLLMLWVPGSS. Residues 20 to 120 enclose the Ig-like domain; sequence GDIVMTQTPL…YYCMQATQFP (101 aa). The segment at 21 to 43 is framework-1; sequence DIVMTQTPLSSPVTLGQPASISC. The cysteines at positions 43 and 113 are disulfide-linked. A complementarity-determining-1 region spans residues 44–59; the sequence is RSSQSLVHSDGNTYLS. The interval 60-74 is framework-2; the sequence is WLQQRPGQPPRLLIY. The complementarity-determining-2 stretch occupies residues 75 to 81; the sequence is KISNRFS. Residues 82–113 are framework-3; the sequence is GVPDRFSGSGAGTDFTLKISRVEAEDVGVYYC. The segment at 114–120 is complementarity-determining-3; the sequence is MQATQFP.

As to quaternary structure, immunoglobulins are composed of two identical heavy chains and two identical light chains; disulfide-linked.

The protein localises to the secreted. It localises to the cell membrane. V region of the variable domain of immunoglobulin light chains that participates in the antigen recognition. Immunoglobulins, also known as antibodies, are membrane-bound or secreted glycoproteins produced by B lymphocytes. In the recognition phase of humoral immunity, the membrane-bound immunoglobulins serve as receptors which, upon binding of a specific antigen, trigger the clonal expansion and differentiation of B lymphocytes into immunoglobulins-secreting plasma cells. Secreted immunoglobulins mediate the effector phase of humoral immunity, which results in the elimination of bound antigens. The antigen binding site is formed by the variable domain of one heavy chain, together with that of its associated light chain. Thus, each immunoglobulin has two antigen binding sites with remarkable affinity for a particular antigen. The variable domains are assembled by a process called V-(D)-J rearrangement and can then be subjected to somatic hypermutations which, after exposure to antigen and selection, allow affinity maturation for a particular antigen. This chain is Immunoglobulin kappa variable 2-24, found in Homo sapiens (Human).